Reading from the N-terminus, the 719-residue chain is Phenylalanine--tRNA ligase beta subunit, chloroplastic (719 aa).

In terms of domain architecture, B5 spans 318 to 403 (DHALNINLSI…RIYGYHKFRS (86 aa)). The Mg(2+) site is built by D381, D387, E390, and E391. An FDX-ACB domain is found at 625–718 (SKYPSIIRDL…IVKQLNLKIR (94 aa)).

The protein belongs to the phenylalanyl-tRNA synthetase beta subunit family. Type 1 subfamily. In terms of assembly, tetramer of two alpha and two beta subunits. The cofactor is Mg(2+).

It localises to the plastid. Its subcellular location is the chloroplast. It catalyses the reaction tRNA(Phe) + L-phenylalanine + ATP = L-phenylalanyl-tRNA(Phe) + AMP + diphosphate + H(+). In Pyropia yezoensis (Susabi-nori), this protein is Phenylalanine--tRNA ligase beta subunit, chloroplastic.